A 677-amino-acid chain; its full sequence is DNA ligase (677 aa).

NAD(+) is bound by residues 35-39 (DAEYD), 84-85 (SL), and Glu116. Lys118 functions as the N6-AMP-lysine intermediate in the catalytic mechanism. Positions 139, 176, 295, and 319 each coordinate NAD(+). Cys413, Cys416, Cys431, and Cys437 together coordinate Zn(2+). In terms of domain architecture, BRCT spans 596-677 (LDELPLAGQV…MLAMFADLEG (82 aa)).

This sequence belongs to the NAD-dependent DNA ligase family. LigA subfamily. Mg(2+) serves as cofactor. Requires Mn(2+) as cofactor.

The catalysed reaction is NAD(+) + (deoxyribonucleotide)n-3'-hydroxyl + 5'-phospho-(deoxyribonucleotide)m = (deoxyribonucleotide)n+m + AMP + beta-nicotinamide D-nucleotide.. Its function is as follows. DNA ligase that catalyzes the formation of phosphodiester linkages between 5'-phosphoryl and 3'-hydroxyl groups in double-stranded DNA using NAD as a coenzyme and as the energy source for the reaction. It is essential for DNA replication and repair of damaged DNA. The sequence is that of DNA ligase from Pseudoalteromonas atlantica (strain T6c / ATCC BAA-1087).